We begin with the raw amino-acid sequence, 194 residues long: Prefoldin subunit 3 (194 aa).

This sequence belongs to the prefoldin subunit alpha family. Heterohexamer of two PFD-alpha type and four PFD-beta type subunits. Interacts with itself. Interacts with Vhl and betaTub56D/tubulin beta-1 chain. Interacts with tubulin alpha-beta heterodimers by itself or in complex with Vhl. Does not interact with microtubules (MTs). As to expression, expressed in larval central nervous system (CNS) and pupal testis (at protein level).

It localises to the cytoplasm. In terms of biological role, binds specifically to cytosolic chaperonin (c-CPN) and transfers target proteins to it. Binds to nascent polypeptide chain and promotes folding in an environment in which there are many competing pathways for nonnative proteins. Required for tubulin stability and spindle and centrosome formation in cooperation with Vhl. The sequence is that of Prefoldin subunit 3 (mgr) from Drosophila melanogaster (Fruit fly).